Here is a 431-residue protein sequence, read N- to C-terminus: O-methyltransferase xanE (431 aa).

Residue Asp283 participates in S-adenosyl-L-methionine binding. His330 serves as the catalytic Proton acceptor.

This sequence belongs to the class I-like SAM-binding methyltransferase superfamily. Cation-independent O-methyltransferase family.

The protein operates within secondary metabolite biosynthesis. Functionally, O-methyltransferase; part of the gene cluster that mediates the biosynthesis of the isocyanide xanthocillin and its derivatives. The first step of the pathway consists in the conversion of tyrosine into a vinyl-isonitrile intermediate by the isocyanide synthase xanB. Subsequent oxidative dimerization of this intermediate to form xanthocillin may involve the cytochrome P450 monooxygenase xanG, whose expression is coregulated with that of XanB. Xanthocillin can be further modified by the isonitrile hydratase-like protein xanA which introduces N-formyl groups and the methyltransferase xanE which introduces methyl groups, leading to the production of several derivatives including fumiformamide. Finally, fumiformamide can be subject to both oxidative and reductive cyclization to yield melanocins E and F, respectively. This is O-methyltransferase xanE from Aspergillus fumigatus (strain ATCC MYA-4609 / CBS 101355 / FGSC A1100 / Af293) (Neosartorya fumigata).